The chain runs to 142 residues: Large ribosomal subunit protein uL11 (142 aa).

Belongs to the universal ribosomal protein uL11 family. Part of the ribosomal stalk of the 50S ribosomal subunit. Interacts with L10 and the large rRNA to form the base of the stalk. L10 forms an elongated spine to which L12 dimers bind in a sequential fashion forming a multimeric L10(L12)X complex. In terms of processing, one or more lysine residues are methylated.

Its function is as follows. Forms part of the ribosomal stalk which helps the ribosome interact with GTP-bound translation factors. In Edwardsiella ictaluri (strain 93-146), this protein is Large ribosomal subunit protein uL11.